Consider the following 378-residue polypeptide: Cytochrome b (378 aa).

4 helical membrane passes run 33–53 (FGSLLGACLMIQITTGLFLAM), 77–98 (WMIRLLHANGASMFFVCLFLHT), 113–133 (WNIGTILLLMTMATAFMGYVL), and 178–198 (FFTFHFILPFIITALATIHLL). Heme b-binding residues include H83 and H97. 2 residues coordinate heme b: H182 and H196. Position 201 (H201) interacts with a ubiquinone. 4 helical membrane-spanning segments follow: residues 226–246 (TKDIFGLTLLLLLLTSLTLFT), 288–308 (LGGVLALLLSIMILTIIPATH), 320–340 (ITQILFWTLAADLLTLTWIGG), and 347–366 (FEAIGQTASIAYFLIITLIP).

Belongs to the cytochrome b family. In terms of assembly, the cytochrome bc1 complex contains 11 subunits: 3 respiratory subunits (MT-CYB, CYC1 and UQCRFS1), 2 core proteins (UQCRC1 and UQCRC2) and 6 low-molecular weight proteins (UQCRH/QCR6, UQCRB/QCR7, UQCRQ/QCR8, UQCR10/QCR9, UQCR11/QCR10 and a cleavage product of UQCRFS1). This cytochrome bc1 complex then forms a dimer. Heme b serves as cofactor.

The protein resides in the mitochondrion inner membrane. In terms of biological role, component of the ubiquinol-cytochrome c reductase complex (complex III or cytochrome b-c1 complex) that is part of the mitochondrial respiratory chain. The b-c1 complex mediates electron transfer from ubiquinol to cytochrome c. Contributes to the generation of a proton gradient across the mitochondrial membrane that is then used for ATP synthesis. This Cebus albifrons (White-fronted capuchin) protein is Cytochrome b (MT-CYB).